Reading from the N-terminus, the 414-residue chain is Transmembrane protein 184A (414 aa).

The disordered stretch occupies residues 1–32 (MTDTPGLLGTPLAWTPPARPAGPQMERAGNGS). 7 helical membrane passes run 48-68 (VSGV…YLHL), 83-103 (LLFI…LLGG), 120-140 (FVIY…SAIM), 177-197 (LQFC…QAFG), 211-231 (LYIT…LFLF), 248-268 (FLTI…LAIL), and 290-310 (VAAG…SIAL). 2 disordered regions span residues 323–342 (TESS…GLKE) and 364–414 (YTQQ…AEEL). Over residues 379–388 (SVPSPRTPTH) the composition is skewed to polar residues.

This sequence belongs to the TMEM184 family. Expressed in vascular cells (at protein level).

The protein resides in the cell membrane. It localises to the cytoplasm. It is found in the perinuclear region. Its subcellular location is the cytoplasmic vesicle membrane. The protein localises to the early endosome membrane. The protein resides in the endosome. It localises to the cytoplasmic vesicle. It is found in the secretory vesicle membrane. Acts as a heparin receptor in vascular cells. May be involved in vesicle transport in exocrine cells and Sertoli cells. The polypeptide is Transmembrane protein 184A (TMEM184A) (Bos taurus (Bovine)).